Reading from the N-terminus, the 153-residue chain is Troponin C (153 aa).

EF-hand domains lie at 9–44 (EQVQ…LGQT), 45–80 (FEEN…FLVE), 85–120 (AMQE…LDDK), and 121–153 (LTED…MTGD). D58, D60, S62, E64, and E69 together coordinate Ca(2+). Ca(2+) contacts are provided by D134, D136, S138, T140, and E145.

This sequence belongs to the troponin C family.

Functionally, troponin is the central regulatory protein of striated muscle contraction. Tn consists of three components: Tn-I which is the inhibitor of actomyosin ATPase, Tn-T which contains the binding site for tropomyosin and Tn-C. The binding of calcium to Tn-C abolishes the inhibitory action of Tn on actin filaments. This Tyrophagus putrescentiae (Mold mite) protein is Troponin C.